The chain runs to 164 residues: Protein CURVATURE THYLAKOID 1A, chloroplastic (164 aa).

Residues 1–62 (MAISVAASSS…LQKVELLKTR (62 aa)) constitute a chloroplast transit peptide. Residue Ala-63 is modified to N-acetylalanine. The Stromal portion of the chain corresponds to 63 to 93 (ASSEETSSIDTNELITDLKEKWDGLENKSTV). A helical membrane pass occupies residues 94–114 (LIYGGGAIVAVWLSSIVVGAI). Over 115–116 (NS) the chain is Lumenal. Residues 117–137 (VPLLPKVMELVGLGYTGWFVY) form a helical membrane-spanning segment. Residues 138–164 (RYLLFKSSRKELAEDIESLKKKIAGSE) lie on the Stromal side of the membrane. Residues 140 to 164 (LLFKSSRKELAEDIESLKKKIAGSE) are a coiled coil.

This sequence belongs to the CURT family. Homo- and heterodimers and trimers.

The protein resides in the plastid. It localises to the chloroplast. The protein localises to the plastoglobule. It is found in the membrane. Its subcellular location is the chloroplast thylakoid membrane. Functionally, determines thylakoid architecture by inducing membrane curvature. The sequence is that of Protein CURVATURE THYLAKOID 1A, chloroplastic (CURT1A) from Arabidopsis thaliana (Mouse-ear cress).